A 735-amino-acid chain; its full sequence is MPKNRTGRSREAREKKRKEEEEEIEELNSQIEALSETVDHFAELPLTQPTKSALKNAHFITLTEIQKQCIPSALKGRDILGAAKTGSGKTLAFIVPLIENLYRKKWTSLDGLGALVISPTRELAIQTFETLVKIGRLHSFSAGLIIGGNNYKEEKERLSRMNILVCTPGRLLQHIDQAVNFDTSGLQMLILDEADRILDMGFRTTLDAIVSSLPVHRQTMLFSATQTKSVKDLARLSLQNPDFISVHENDTSSTPSNLNQFYLTVPLTEKLDILFGFIRTHLKFKTIVFLSSCKQVRFVYETFRRMRPGISLLHLHGKQKQTTRTEVTAKFTSSRHVVLFCTDIVARGLDFPAVDWVIQLDAPEDVDTYIHRVGRTARYNRSGNALLLLLPSEEAFLKRLESKKIAVERINVKDGKKTSIRNQLQNLCFKDNDIKYIGQKAFISYLRSIYLQKDKDVFQLDKLPVEAFADSLGLPGTPKITFGKLKNHSQSQKDYNSSTSLDSSEESEVDVENKQNVRTKYDRIFERKNQDVLAAHRQRLVEVNSDEDDGDFLQVKRVDHDLPEETGERFNANSKRKEKMASSKKAMLKYKKSADKVYFDDEGNAIPFYAMNTEDTFQKAGDPAALIASHLAEERKALEKADITDKETVRQKQLEKKRRRQELERITQQDATPDEYVPEGPIVAFVDDELPETSKKQKKWFEDNDERDHGGIVEVENLNSLEDQEALALKLMGAA.

The interval methionine 1–isoleucine 24 is disordered. A compositionally biased stretch (basic and acidic residues) spans arginine 8–glutamate 19. Residues aspartate 39 to lysine 67 carry the Q motif motif. Residues isoleucine 70–isoleucine 244 form the Helicase ATP-binding domain. Alanine 83–threonine 90 provides a ligand contact to ATP. A DEAD box motif is present at residues aspartate 192–aspartate 195. One can recognise a Helicase C-terminal domain in the interval lysine 270 to leucine 424. Positions glycine 483–asparagine 513 are disordered. 4 positions are modified to phosphoserine: serine 500, serine 503, serine 504, and serine 545. The tract at residues lysine 652–isoleucine 712 is disordered. Residues glutamate 692–glycine 711 are compositionally biased toward basic and acidic residues.

Belongs to the DEAD box helicase family. DDX10/DBP4 subfamily. Interacts with the U3 and U14 snoRNAs. Associates with pre-ribosomal complexes.

It localises to the nucleus. The protein resides in the nucleolus. It carries out the reaction ATP + H2O = ADP + phosphate + H(+). Functionally, ATP-dependent RNA helicase required for ribosome biogenesis. Involved in the release of U14 snoRNA in pre-ribosomal complexes. Required for pre-rRNA cleavage at site A2. This is ATP-dependent RNA helicase dbp4 (dbp4) from Schizosaccharomyces pombe (strain 972 / ATCC 24843) (Fission yeast).